The following is an 83-amino-acid chain: Hainantoxin-III 2 (83 aa).

Positions 1-21 are cleaved as a signal peptide; sequence MKASMYLALAGLVLLFVVGYA. Residues 22 to 48 constitute a propeptide that is removed on maturation; the sequence is SESEEKEFPRELLSKIFAVDDFKGEER. 3 disulfides stabilise this stretch: Cys50/Cys65, Cys57/Cys70, and Cys64/Cys77. Leu81 is modified (leucine amide).

Belongs to the neurotoxin 10 (Hwtx-1) family. 15 (Hntx-3) subfamily. In terms of assembly, monomer. As to expression, expressed by the venom gland.

Its subcellular location is the secreted. In terms of biological role, selective antagonist of neuronal tetrodotoxin (TTX)-sensitive voltage-gated sodium channels (IC(50)=1270 nM on Nav1.1/SCN1A, 270 nM on Nav1.2/SCN2A, 491 nM on Nav1.3/SCN3A and 232 nM on Nav1.7/SCN9A). This toxin suppress Nav1.7 current amplitude without significantly altering the activation, inactivation, and repriming kinetics. Short extreme depolarizations partially activate the toxin-bound channel, indicating voltage-dependent inhibition of this toxin. This toxin increases the deactivation of the Nav1.7 current after extreme depolarizations. The toxin-Nav1.7 complex is gradually dissociated upon prolonged strong depolarizations in a voltage-dependent manner, and the unbound toxin rebinds to Nav1.7 after a long repolarization. Moreover, analysis of chimeric channels showed that the DIIS3-S4 linker is critical for toxin binding to Nav1.7. These data are consistent with this toxin interacting with Nav1.7 site 4 and trapping the domain II voltage sensor in the closed state. This is Hainantoxin-III 2 from Cyriopagopus hainanus (Chinese bird spider).